The chain runs to 213 residues: Protein arginine N-methyltransferase SFM1 (213 aa).

Residues Ser-204 and Ser-207 each carry the phosphoserine modification.

The protein belongs to the class IV-like SAM-binding methyltransferase superfamily. Protein arginine N-methyltransferase SFM1 family.

Its subcellular location is the cytoplasm. S-adenosyl-L-methionine-dependent protein-arginine N-methyltransferase that monomethylates ribosomal protein S3 (RPS3) at 'Arg-146'. The sequence is that of Protein arginine N-methyltransferase SFM1 from Saccharomyces cerevisiae (strain ATCC 204508 / S288c) (Baker's yeast).